The chain runs to 497 residues: Pentatricopeptide repeat-containing protein At2g36240 (497 aa).

9 PPR repeats span residues 156-186 (LEPI…MKRL), 192-226 (NVGV…RAKP), 227-261 (DVCT…GCEP), 262-296 (NVVS…GCRF), 297-331 (SEAT…RVLP), 332-366 (SEFD…GQTP), 367-401 (CFIA…GILP), 402-436 (DSVT…GYEP), and 437-471 (DETT…DMLP).

Belongs to the PPR family. P subfamily.

The protein is Pentatricopeptide repeat-containing protein At2g36240 of Arabidopsis thaliana (Mouse-ear cress).